We begin with the raw amino-acid sequence, 142 residues long: Tol-Pal system protein TolR (142 aa).

The Cytoplasmic segment spans residues 1–17 (MARARGRGRRDLKSEIN). Residues 18–38 (IVPLLDVLLVLLLIFMATAPI) traverse the membrane as a helical segment. At 39-142 (ITQSVEVDLP…KSVGLMTQPI (104 aa)) the chain is on the periplasmic side.

The protein belongs to the ExbD/TolR family. The Tol-Pal system is composed of five core proteins: the inner membrane proteins TolA, TolQ and TolR, the periplasmic protein TolB and the outer membrane protein Pal. They form a network linking the inner and outer membranes and the peptidoglycan layer.

Its subcellular location is the cell inner membrane. Its function is as follows. Part of the Tol-Pal system, which plays a role in outer membrane invagination during cell division and is important for maintaining outer membrane integrity. Required, with TolQ, for the proton motive force-dependent activation of TolA and for TolA-Pal interaction. The polypeptide is Tol-Pal system protein TolR (Escherichia coli O157:H7).